The sequence spans 36 residues: U14-myrmicitoxin-Tb1a (36 aa).

A signal peptide spans 1–23; it reads MKIIKLITIFTMMATLMXXVANG. A propeptide spanning residues 24-25 is cleaved from the precursor; sequence EP. Position 35 is a glutamine amide (Gln35).

Expressed by the venom gland.

It is found in the secreted. Its function is as follows. Venom protein with unknown function. Does not induce paralysis when a high dose is administered by intrathoracic injection into the blowfly Lucilia caesar. The polypeptide is U14-myrmicitoxin-Tb1a (Tetramorium bicarinatum (Tramp ant)).